Here is a 352-residue protein sequence, read N- to C-terminus: MPDIRDVEIIAPNFKRRLSGVTSTIVQLIPCQIRLGIKIATLGPGLPEDLPKLKWRQLLGLWRPPARRRRRVWHARRNNEMAVGILLRHLTRMPLKLLFTSAAQRRHTAYTKWLIRRMDAVIATSDRSGSFLEVPHTVIQHGVDLALFHPPEAAEDGIAATGLPGRHLVGCFGRVRHQKGTDLFVRAMIELLPQHTEWTAVVSGRVTAEHVAFADKLKADVVAAGLSDRILFLGEVPDIKIWYRRLTLYVAPSRNEGFGLTPLEAMASRTAVVASDAGAYAELIVTGETGSVVAASDGEALTRAIAPYIADPALAVAHGENALRHVRANFALEREASAIGAVYNSLLGDNRS.

The protein belongs to the glycosyltransferase group 1 family. Glycosyltransferase 4 subfamily.

The protein operates within bacterial outer membrane biogenesis; LPS core biosynthesis. Functionally, acts at transfer of mannose group to a 3-deoxy-D-mono octulonic acid (KDO) via an alpha-1,5 linkage. The sequence is that of Lipopolysaccharide core biosynthesis mannosyltransferase LpcC (lpcC) from Rhizobium leguminosarum bv. viciae.